The primary structure comprises 466 residues: Methylenetetrahydrofolate--tRNA-(uracil-5-)-methyltransferase TrmFO (466 aa).

Glycine 14–glycine 19 is a binding site for FAD.

It belongs to the MnmG family. TrmFO subfamily. FAD is required as a cofactor.

The protein resides in the cytoplasm. It carries out the reaction uridine(54) in tRNA + (6R)-5,10-methylene-5,6,7,8-tetrahydrofolate + NADH + H(+) = 5-methyluridine(54) in tRNA + (6S)-5,6,7,8-tetrahydrofolate + NAD(+). The enzyme catalyses uridine(54) in tRNA + (6R)-5,10-methylene-5,6,7,8-tetrahydrofolate + NADPH + H(+) = 5-methyluridine(54) in tRNA + (6S)-5,6,7,8-tetrahydrofolate + NADP(+). In terms of biological role, catalyzes the folate-dependent formation of 5-methyl-uridine at position 54 (M-5-U54) in all tRNAs. The sequence is that of Methylenetetrahydrofolate--tRNA-(uracil-5-)-methyltransferase TrmFO from Brucella canis (strain ATCC 23365 / NCTC 10854 / RM-666).